Reading from the N-terminus, the 191-residue chain is Dephospho-CoA kinase (191 aa).

In terms of domain architecture, DPCK spans 3–191 (AIGITGSYAS…KLIKDLECRV (189 aa)). Residue 11 to 16 (ASGKTF) participates in ATP binding.

Belongs to the CoaE family.

It is found in the cytoplasm. It catalyses the reaction 3'-dephospho-CoA + ATP = ADP + CoA + H(+). The protein operates within cofactor biosynthesis; coenzyme A biosynthesis; CoA from (R)-pantothenate: step 5/5. In terms of biological role, catalyzes the phosphorylation of the 3'-hydroxyl group of dephosphocoenzyme A to form coenzyme A. In Rickettsia prowazekii (strain Madrid E), this protein is Dephospho-CoA kinase.